A 182-amino-acid polypeptide reads, in one-letter code: ATP-dependent protease subunit HslV (182 aa).

Threonine 2 is a catalytic residue. Na(+)-binding residues include glycine 157, cysteine 160, and threonine 163.

It belongs to the peptidase T1B family. HslV subfamily. A double ring-shaped homohexamer of HslV is capped on each side by a ring-shaped HslU homohexamer. The assembly of the HslU/HslV complex is dependent on binding of ATP.

Its subcellular location is the cytoplasm. The enzyme catalyses ATP-dependent cleavage of peptide bonds with broad specificity.. With respect to regulation, allosterically activated by HslU binding. In terms of biological role, protease subunit of a proteasome-like degradation complex believed to be a general protein degrading machinery. This Sodalis glossinidius (strain morsitans) protein is ATP-dependent protease subunit HslV.